The chain runs to 134 residues: Large-conductance mechanosensitive channel (134 aa).

2 helical membrane-spanning segments follow: residues 15–35 (IDLA…QSVV) and 80–100 (GNFI…FLAV).

This sequence belongs to the MscL family. In terms of assembly, homopentamer.

The protein localises to the cell inner membrane. In terms of biological role, channel that opens in response to stretch forces in the membrane lipid bilayer. May participate in the regulation of osmotic pressure changes within the cell. This Methylocella silvestris (strain DSM 15510 / CIP 108128 / LMG 27833 / NCIMB 13906 / BL2) protein is Large-conductance mechanosensitive channel.